Here is a 149-residue protein sequence, read N- to C-terminus: D-aminoacyl-tRNA deacylase (149 aa).

The short motif at 137-138 (GP) is the Gly-cisPro motif, important for rejection of L-amino acids element.

It belongs to the DTD family. In terms of assembly, homodimer.

Its subcellular location is the cytoplasm. It carries out the reaction glycyl-tRNA(Ala) + H2O = tRNA(Ala) + glycine + H(+). The enzyme catalyses a D-aminoacyl-tRNA + H2O = a tRNA + a D-alpha-amino acid + H(+). An aminoacyl-tRNA editing enzyme that deacylates mischarged D-aminoacyl-tRNAs. Also deacylates mischarged glycyl-tRNA(Ala), protecting cells against glycine mischarging by AlaRS. Acts via tRNA-based rather than protein-based catalysis; rejects L-amino acids rather than detecting D-amino acids in the active site. By recycling D-aminoacyl-tRNA to D-amino acids and free tRNA molecules, this enzyme counteracts the toxicity associated with the formation of D-aminoacyl-tRNA entities in vivo and helps enforce protein L-homochirality. This Thermoanaerobacter sp. (strain X514) protein is D-aminoacyl-tRNA deacylase.